A 711-amino-acid polypeptide reads, in one-letter code: Putative membrane protein IgaA homolog (711 aa).

Residue Met1 is a topological domain, periplasmic. The chain crosses the membrane as a helical span at residues Ser2–Ile22. At Lys23–Arg204 the chain is on the cytoplasmic side. Transmembrane regions (helical) follow at residues Glu205–Val225 and Phe226–Phe246. The Cytoplasmic segment spans residues Ala247–Arg339. A helical transmembrane segment spans residues Ser340 to Leu360. Residues Asp361–Tyr655 lie on the Periplasmic side of the membrane. The chain crosses the membrane as a helical span at residues Leu656–Ala676. Topologically, residues Trp677–Glu711 are cytoplasmic.

It belongs to the IgaA family.

Its subcellular location is the cell inner membrane. The chain is Putative membrane protein IgaA homolog (yrfF) from Escherichia coli (strain K12).